The chain runs to 108 residues: uncharacterized protein (108 aa).

It to H.influenzae HI_0341.

This is an uncharacterized protein from Escherichia coli (strain K12).